The primary structure comprises 308 residues: ATP synthase gamma chain (308 aa).

The protein belongs to the ATPase gamma chain family. F-type ATPases have 2 components, CF(1) - the catalytic core - and CF(0) - the membrane proton channel. CF(1) has five subunits: alpha(3), beta(3), gamma(1), delta(1), epsilon(1). CF(0) has three main subunits: a, b and c.

Its subcellular location is the cell membrane. Its function is as follows. Produces ATP from ADP in the presence of a proton gradient across the membrane. The gamma chain is believed to be important in regulating ATPase activity and the flow of protons through the CF(0) complex. The protein is ATP synthase gamma chain of Lacticaseibacillus casei (strain BL23) (Lactobacillus casei).